The sequence spans 196 residues: Holliday junction branch migration complex subunit RuvA (196 aa).

The interval Met-1–Leu-63 is domain I. The tract at residues Asn-64–Thr-138 is domain II. Position 138 (Thr-138) is a region of interest, flexible linker. The interval Ser-139 to Gly-196 is domain III.

This sequence belongs to the RuvA family. In terms of assembly, homotetramer. Forms an RuvA(8)-RuvB(12)-Holliday junction (HJ) complex. HJ DNA is sandwiched between 2 RuvA tetramers; dsDNA enters through RuvA and exits via RuvB. An RuvB hexamer assembles on each DNA strand where it exits the tetramer. Each RuvB hexamer is contacted by two RuvA subunits (via domain III) on 2 adjacent RuvB subunits; this complex drives branch migration. In the full resolvosome a probable DNA-RuvA(4)-RuvB(12)-RuvC(2) complex forms which resolves the HJ.

The protein localises to the cytoplasm. In terms of biological role, the RuvA-RuvB-RuvC complex processes Holliday junction (HJ) DNA during genetic recombination and DNA repair, while the RuvA-RuvB complex plays an important role in the rescue of blocked DNA replication forks via replication fork reversal (RFR). RuvA specifically binds to HJ cruciform DNA, conferring on it an open structure. The RuvB hexamer acts as an ATP-dependent pump, pulling dsDNA into and through the RuvAB complex. HJ branch migration allows RuvC to scan DNA until it finds its consensus sequence, where it cleaves and resolves the cruciform DNA. The polypeptide is Holliday junction branch migration complex subunit RuvA (Borrelia hermsii (strain HS1 / DAH)).